Here is a 501-residue protein sequence, read N- to C-terminus: Mitogen-activated protein kinase 16 (501 aa).

The Protein kinase domain maps to Y22–F313. Residues V28 to V36 and K51 each bind ATP. The Proton acceptor role is filled by D148. T184 carries the post-translational modification Phosphothreonine. Residues T184–Y186 carry the TXY motif. Y186 bears the Phosphotyrosine mark. Residues D477 to T501 are disordered.

This sequence belongs to the protein kinase superfamily. CMGC Ser/Thr protein kinase family. MAP kinase subfamily. In terms of processing, dually phosphorylated on Thr-184 and Tyr-186, which activates the enzyme.

It catalyses the reaction L-seryl-[protein] + ATP = O-phospho-L-seryl-[protein] + ADP + H(+). It carries out the reaction L-threonyl-[protein] + ATP = O-phospho-L-threonyl-[protein] + ADP + H(+). With respect to regulation, activated by threonine and tyrosine phosphorylation. This is Mitogen-activated protein kinase 16 (MPK16) from Oryza sativa subsp. japonica (Rice).